The primary structure comprises 450 residues: Protein tailless (450 aa).

The nuclear receptor DNA-binding region spans 31–108 (HVPCKVCRDH…VGMNKDAVQH (78 aa)). 2 consecutive NR C4-type zinc fingers follow at residues 34-54 (CKVCRDHSSGKHYGIYACDGC) and 70-96 (CKSQKQGLCVVDKTHRNQCRACRLRKC). Residues 187-448 (VPRVPHHPVH…RLISDMYSQR (262 aa)) form the NR LBD domain.

Belongs to the nuclear hormone receptor family. NR2 subfamily. In terms of assembly, monomer.

It localises to the nucleus. Orphan receptor that binds DNA as a monomer to hormone response elements (HRE) containing an extended core motif half-site sequence 5'-AAGTCA-3' in which the 5' flanking nucleotides participate in determining receptor specificity. This receptor binds to the consensus sequence [AG][AG]AAGTCAA. Plays a key role in the establishment of non-metameric domains at the anterior and posterior poles of the embryo. It may also play a role in the nervous system. The maternal terminal pathway activates the tll gene in the termini; TLL activity then represses segmentation and activates terminal-specific genes in these domains. Involved in the regulation of early eye development. In the embryonic visual system anlage drives cells to optic lobe as opposed to Bolwig's organ fate. The sequence is that of Protein tailless (tll) from Drosophila virilis (Fruit fly).